A 344-amino-acid polypeptide reads, in one-letter code: Arginine N-succinyltransferase (344 aa).

A succinyl-CoA-binding site is contributed by leucine 125. Histidine 229 acts as the Proton donor in catalysis.

It belongs to the arginine N-succinyltransferase family.

The enzyme catalyses succinyl-CoA + L-arginine = N(2)-succinyl-L-arginine + CoA + H(+). Its pathway is amino-acid degradation; L-arginine degradation via AST pathway; L-glutamate and succinate from L-arginine: step 1/5. Functionally, catalyzes the transfer of succinyl-CoA to arginine to produce N(2)-succinylarginine. This Salmonella dublin (strain CT_02021853) protein is Arginine N-succinyltransferase.